We begin with the raw amino-acid sequence, 347 residues long: S-adenosylmethionine:tRNA ribosyltransferase-isomerase (347 aa).

It belongs to the QueA family. In terms of assembly, monomer.

The protein localises to the cytoplasm. It catalyses the reaction 7-aminomethyl-7-carbaguanosine(34) in tRNA + S-adenosyl-L-methionine = epoxyqueuosine(34) in tRNA + adenine + L-methionine + 2 H(+). Its pathway is tRNA modification; tRNA-queuosine biosynthesis. Functionally, transfers and isomerizes the ribose moiety from AdoMet to the 7-aminomethyl group of 7-deazaguanine (preQ1-tRNA) to give epoxyqueuosine (oQ-tRNA). In Gluconobacter oxydans (strain 621H) (Gluconobacter suboxydans), this protein is S-adenosylmethionine:tRNA ribosyltransferase-isomerase.